The chain runs to 495 residues: Thioredoxin reductase SEP1 (495 aa).

Asp37 to Cys54 lines the FAD pocket. Cys54 and Cys59 form a disulfide bridge. His468 functions as the Proton acceptor in the catalytic mechanism. The segment at residues Cys493–Sec494 is a cross-link (cysteinyl-selenocysteine (Cys-Sec)). Sec494 is a non-standard amino acid (selenocysteine).

This sequence belongs to the class-I pyridine nucleotide-disulfide oxidoreductase family. As to quaternary structure, homodimer. FAD serves as cofactor. The N-terminus is blocked.

The catalysed reaction is [thioredoxin]-dithiol + NADP(+) = [thioredoxin]-disulfide + NADPH + H(+). Activity was very low in selenium-depleted cells, but increased 4-fold to the same level as in selenium-sufficient cells for 70 hours after the addition of 10 nm selenite. The sequence is that of Thioredoxin reductase SEP1 (SEP1) from Emiliania huxleyi (Coccolithophore).